Consider the following 181-residue polypeptide: Adenine phosphoribosyltransferase (181 aa).

Belongs to the purine/pyrimidine phosphoribosyltransferase family. Homodimer.

The protein localises to the cytoplasm. The enzyme catalyses AMP + diphosphate = 5-phospho-alpha-D-ribose 1-diphosphate + adenine. It functions in the pathway purine metabolism; AMP biosynthesis via salvage pathway; AMP from adenine: step 1/1. In terms of biological role, catalyzes a salvage reaction resulting in the formation of AMP, that is energically less costly than de novo synthesis. The polypeptide is Adenine phosphoribosyltransferase (Shewanella woodyi (strain ATCC 51908 / MS32)).